The primary structure comprises 343 residues: Dihydroorotase (343 aa).

The Zn(2+) site is built by histidine 13 and histidine 15. Substrate-binding positions include 15-17 (HFR) and asparagine 41. Positions 98, 135, and 173 each coordinate Zn(2+). Lysine 98 bears the N6-carboxylysine mark. A substrate-binding site is contributed by histidine 135. Leucine 218 provides a ligand contact to substrate. Residue aspartate 246 participates in Zn(2+) binding. Aspartate 246 is an active-site residue. Positions 250 and 262 each coordinate substrate.

It belongs to the metallo-dependent hydrolases superfamily. DHOase family. Class II DHOase subfamily. In terms of assembly, homodimer. It depends on Zn(2+) as a cofactor.

It carries out the reaction (S)-dihydroorotate + H2O = N-carbamoyl-L-aspartate + H(+). The protein operates within pyrimidine metabolism; UMP biosynthesis via de novo pathway; (S)-dihydroorotate from bicarbonate: step 3/3. Catalyzes the reversible cyclization of carbamoyl aspartate to dihydroorotate. In Marinomonas sp. (strain MWYL1), this protein is Dihydroorotase.